A 532-amino-acid polypeptide reads, in one-letter code: Protein FAM227B (532 aa).

A coiled-coil region spans residues 432–482 (DNKKDFKRVKQRIKDDIKFLREQQELIDKELDRIQAKASKNLQEVKNEFEN). The interval 494–532 (KEEYGGSTSASESPQSMQSPQSSSSFPTISEDFNNVEEG) is disordered. Residues 500–523 (STSASESPQSMQSPQSSSSFPTIS) are compositionally biased toward low complexity.

The protein belongs to the FAM227 family.

The polypeptide is Protein FAM227B (Fam227b) (Mus musculus (Mouse)).